We begin with the raw amino-acid sequence, 416 residues long: 46 kDa surface antigen (416 aa).

The N-terminal stretch at 1-27 (MLRKKFLYSSAIYATSLASIIAFVAAG) is a signal peptide. Residue cysteine 28 is the site of N-palmitoyl cysteine attachment. Residue cysteine 28 is the site of S-diacylglycerol cysteine attachment.

It localises to the cell membrane. The protein is 46 kDa surface antigen (p46) of Mesomycoplasma hyopneumoniae (strain 232) (Mycoplasma hyopneumoniae).